The primary structure comprises 459 residues: Mitochondrial distribution and morphology protein 34 (459 aa).

Residues 1-190 (MSFRFNEAVF…LPSLIFNTSQ (190 aa)) form the SMP-LTD domain. The span at 338 to 347 (RSNSNDDNAK) shows a compositional bias: basic and acidic residues. The segment at 338–375 (RSNSNDDNAKPRRRKIKCKKTRTPSNLQSQGEQAVDDS) is disordered. Over residues 348–359 (PRRRKIKCKKTR) the composition is skewed to basic residues.

The protein belongs to the MDM34 family. In terms of assembly, component of the ER-mitochondria encounter structure (ERMES) or MDM complex, composed of MMM1, MDM10, MDM12 and MDM34. In terms of processing, ubiquitinated by a SCF (SKP1-CUL1-F-box protein) E3 ubiquitin-protein ligase complex containing the F-box protein MDM30. Ubiquitination is important for mitochondrial integrity.

It is found in the mitochondrion outer membrane. Functionally, component of the ERMES/MDM complex, which serves as a molecular tether to connect the endoplasmic reticulum (ER) and mitochondria. Components of this complex are involved in the control of mitochondrial shape and protein biogenesis, and function in nonvesicular lipid trafficking between the ER and mitochondria. MDM34 is required for the interaction of the ER-resident membrane protein MMM1 and the outer mitochondrial membrane-resident beta-barrel protein MDM10. This is Mitochondrial distribution and morphology protein 34 from Saccharomyces cerevisiae (strain RM11-1a) (Baker's yeast).